Consider the following 218-residue polypeptide: Small ribosomal subunit protein uS3c (218 aa).

A KH type-2 domain is found at 47-118 (VRRHMKNYSN…KLNISIAKVA (72 aa)).

It belongs to the universal ribosomal protein uS3 family. In terms of assembly, part of the 30S ribosomal subunit.

The protein localises to the plastid. The protein resides in the chloroplast. The protein is Small ribosomal subunit protein uS3c (rps3) of Ginkgo biloba (Ginkgo).